Consider the following 225-residue polypeptide: Orotate phosphoribosyltransferase (225 aa).

Residues Arg-107, Lys-108, Lys-111, and 133-141 (EDLTTDGGS) each bind 5-phospho-alpha-D-ribose 1-diphosphate. Thr-137 contacts orotate.

Belongs to the purine/pyrimidine phosphoribosyltransferase family. PyrE subfamily. Homodimer. Mg(2+) serves as cofactor.

The enzyme catalyses orotidine 5'-phosphate + diphosphate = orotate + 5-phospho-alpha-D-ribose 1-diphosphate. The protein operates within pyrimidine metabolism; UMP biosynthesis via de novo pathway; UMP from orotate: step 1/2. In terms of biological role, catalyzes the transfer of a ribosyl phosphate group from 5-phosphoribose 1-diphosphate to orotate, leading to the formation of orotidine monophosphate (OMP). The polypeptide is Orotate phosphoribosyltransferase (Roseobacter denitrificans (strain ATCC 33942 / OCh 114) (Erythrobacter sp. (strain OCh 114))).